Reading from the N-terminus, the 261-residue chain is MTDSAAPRLHVQALSADCAEAARRWAERLGLPLAADDEAEFAVQVGEQGLQVLQLGADSPGPVRVDFVEGASAHRRKFGGGSGQMIAKAVGVQPGIRPRVLDATAGLGRDGFVLASLGCEVTLVERQPLIAALLEDGLERARRDPDVAPIAARMRLLGGNSADLMRAWDGEAPQVVYLDPMFPHRDKSALVKKEMRLFRPLVGDDLDAPALLQAALALASHRVVVKRPRKAPIIEGPKPGYSLEGKSSRYDIYPKKALGKG.

S-adenosyl-L-methionine-binding positions include 109 to 110 (RD), 125 to 126 (ER), and D179.

The protein belongs to the methyltransferase superfamily. RsmJ family.

It is found in the cytoplasm. The catalysed reaction is guanosine(1516) in 16S rRNA + S-adenosyl-L-methionine = N(2)-methylguanosine(1516) in 16S rRNA + S-adenosyl-L-homocysteine + H(+). In terms of biological role, specifically methylates the guanosine in position 1516 of 16S rRNA. This is Ribosomal RNA small subunit methyltransferase J from Pseudomonas aeruginosa (strain ATCC 15692 / DSM 22644 / CIP 104116 / JCM 14847 / LMG 12228 / 1C / PRS 101 / PAO1).